The chain runs to 221 residues: UPF0758 protein CGSHiEE_07200 (221 aa).

One can recognise an MPN domain in the interval 99–221; it reads IINDPETVKL…CYSFAENCLL (123 aa). Positions 170, 172, and 183 each coordinate Zn(2+). The short motif at 170–183 is the JAMM motif element; sequence HNHPSGVTEPSYSD.

This sequence belongs to the UPF0758 family.

In Haemophilus influenzae (strain PittEE), this protein is UPF0758 protein CGSHiEE_07200.